The primary structure comprises 236 residues: Bax inhibitor 1 (236 aa).

Residues 1–29 (MNIFDRKINFDALFKFSHITPSTQQHLKK) lie on the Cytoplasmic side of the membrane. Lysine 7 is covalently cross-linked (Glycyl lysine isopeptide (Lys-Gly) (interchain with G-Cter in ubiquitin)). The chain crosses the membrane as a helical span at residues 30-50 (VYASFALCMFVAAAGAYIHVV). Over 51-52 (TH) the chain is Lumenal. The chain crosses the membrane as a helical span at residues 53-73 (FIQAGLLSALGSLGLMIWLMA). Residues 74–86 (TPHSHETEQKRLG) are Cytoplasmic-facing. The chain crosses the membrane as a helical span at residues 87-107 (LLAGFAFLTGVGLGPALDLCI). Over 108 to 112 (AINPS) the chain is Lumenal. Residues 113–133 (ILPTAFMGTAMIFTCFTLSAL) traverse the membrane as a helical segment. The Cytoplasmic portion of the chain corresponds to 134–139 (YARRRS). Residues 140–160 (YLFLGGILMSAMSLMLLSSLG) form a helical membrane-spanning segment. Over 161–166 (NLFFGS) the chain is Lumenal. A helical membrane pass occupies residues 167 to 187 (VWLFQANLYMGLVVMCGFVLF). Topologically, residues 188-206 (DTQLIIEKAENGDKDYIWH) are cytoplasmic. Positions 207-227 (CVDLFLDFVTLFRKLMMILAM) form an intramembrane region, helical. Over 228–236 (NEKDKKKKK) the chain is Cytoplasmic.

The protein belongs to the BI1 family. In terms of assembly, interacts with BCL2 and BCL2L1. Interacts with ERN1. In terms of processing, ubiquitinated by BFAR, leading to proteasomal degradation.

It is found in the endoplasmic reticulum membrane. Endoplasmic reticulum (ER)-resident protein that confers cellular protection as an anti-apoptotic protein by limiting multiple stress-inducing pathways surrounding the endoplasmic reticulum and mitochondria. Inhibits the activities of the key sensor for the endoplasmic reticulum unfolded protein response IRE1alpha/ERN1 both directly and by blocking BAX/BAK binding. Modulates ER calcium homeostasis by acting as a calcium-leak channel. Negatively regulates autophagy and autophagosome formation, especially during periods of nutrient deprivation, and reduces cell survival during starvation. The polypeptide is Bax inhibitor 1 (TMBIM6) (Bos taurus (Bovine)).